A 471-amino-acid polypeptide reads, in one-letter code: Ribulose bisphosphate carboxylase large chain 2 (471 aa).

The substrate site is built by asparagine 116 and threonine 166. Lysine 168 functions as the Proton acceptor in the catalytic mechanism. Lysine 170 contacts substrate. Residues lysine 194, aspartate 196, and glutamate 197 each coordinate Mg(2+). Lysine 194 is subject to N6-carboxylysine. The active-site Proton acceptor is the histidine 287. Substrate-binding residues include arginine 288, histidine 320, and serine 372.

The protein belongs to the RuBisCO large chain family. Type I subfamily. Heterohexadecamer of 8 large chains and 8 small chains. Mg(2+) is required as a cofactor.

The protein resides in the carboxysome. The enzyme catalyses 2 (2R)-3-phosphoglycerate + 2 H(+) = D-ribulose 1,5-bisphosphate + CO2 + H2O. The catalysed reaction is D-ribulose 1,5-bisphosphate + O2 = 2-phosphoglycolate + (2R)-3-phosphoglycerate + 2 H(+). RuBisCO catalyzes two reactions: the carboxylation of D-ribulose 1,5-bisphosphate, the primary event in carbon dioxide fixation, as well as the oxidative fragmentation of the pentose substrate. Both reactions occur simultaneously and in competition at the same active site. In Hydrogenovibrio marinus, this protein is Ribulose bisphosphate carboxylase large chain 2.